A 551-amino-acid polypeptide reads, in one-letter code: Arginine--tRNA ligase (551 aa).

A 'HIGH' region motif is present at residues 123–133; that stretch reads ANPTGPLTIGR.

It belongs to the class-I aminoacyl-tRNA synthetase family. In terms of assembly, monomer.

The protein localises to the cytoplasm. The enzyme catalyses tRNA(Arg) + L-arginine + ATP = L-arginyl-tRNA(Arg) + AMP + diphosphate. The protein is Arginine--tRNA ligase of Chlorobium limicola (strain DSM 245 / NBRC 103803 / 6330).